A 105-amino-acid chain; its full sequence is Delta-hexatoxin-Mg1a (105 aa).

An N-terminal signal peptide occupies residues 1 to 18 (MKTLVIACVALVLVVVHG). A propeptide spanning residues 19–60 (EVIEEVNEKQLQESVEEKYSLLQRLEKLDEAITAEENRNSRV) is cleaved from the precursor. 4 disulfide bridges follow: C63/C77, C70/C82, C76/C93, and C78/C105.

The protein belongs to the neurotoxin 06 (delta-actx) family. Expressed by the venom gland.

The protein localises to the secreted. Functionally, selectively slows channel inactivation of mammalian Nav1.1/SCN1A, Nav1.3/SCN3A, and Nav1.6/SCN8A and shows higher affinity for insect Nav1/para channels (site 3). Induces tonic repetitive firing of nerve impulses in insect neurons accompanied by plateau potentials. The protein is Delta-hexatoxin-Mg1a of Macrothele gigas (Japanese funnel web spider).